We begin with the raw amino-acid sequence, 161 residues long: Phosphopantetheine adenylyltransferase (161 aa).

Substrate is bound at residue T9. ATP-binding positions include 9–10 (TF) and H17. K41, L73, and R87 together coordinate substrate. ATP-binding positions include 88-90 (GLR), E98, and 123-129 (YQFISGT).

The protein belongs to the bacterial CoaD family. Homohexamer. Mg(2+) is required as a cofactor.

The protein resides in the cytoplasm. The catalysed reaction is (R)-4'-phosphopantetheine + ATP + H(+) = 3'-dephospho-CoA + diphosphate. It functions in the pathway cofactor biosynthesis; coenzyme A biosynthesis; CoA from (R)-pantothenate: step 4/5. Functionally, reversibly transfers an adenylyl group from ATP to 4'-phosphopantetheine, yielding dephospho-CoA (dPCoA) and pyrophosphate. The chain is Phosphopantetheine adenylyltransferase from Cupriavidus necator (strain ATCC 17699 / DSM 428 / KCTC 22496 / NCIMB 10442 / H16 / Stanier 337) (Ralstonia eutropha).